We begin with the raw amino-acid sequence, 341 residues long: MDDDASMSIRWGGFFESPARNLGLQLMSSVPAERDTKQLLSGSPFLHHQHQQHVPHHHHQPHHPRDCGANGNANGGAMPPPPATEAPPSMPMNFARSDMWMHPQQQQQHHHPREHKALHNLTVGHGSSHIAHHDPVGYGMIPGTHTLQMMQQQTEPQLQPPPPPQQPKEECISSPLIEENVPVIDEPPPPKKRQQGRQPKVPRAKKPKKSAAPREDGAPPNAPAPRRRGPRKNIGMVINGIDLDLSRIPTPICSCTGAPQQCYRWGAGGWQSACCTTTISTYPLPMSTKRRGARIAGRKMSHGAFKKVLEKLAGEGYNLNNPIDLKTFWAKHGTNKFVTIR.

A compositionally biased stretch (basic residues) spans 48 to 62; that stretch reads HQHQQHVPHHHHQPH. Disordered regions lie at residues 48-95 and 150-234; these read HQHQ…MNFA and MQQQ…RKNI. The span at 68 to 77 shows a compositional bias: low complexity; sequence GANGNANGGA. Pro residues predominate over residues 78–90; it reads MPPPPATEAPPSM. Positions 190–211 are enriched in basic residues; the sequence is PKKRQQGRQPKVPRAKKPKKSA.

It belongs to the BBR/BPC family.

The protein resides in the nucleus. In terms of biological role, transcriptional regulator that specifically binds to GA-rich elements (GAGA-repeats) present in regulatory sequences of genes involved in developmental processes. The sequence is that of Barley B recombinant-like protein A from Oryza sativa subsp. japonica (Rice).